A 281-amino-acid polypeptide reads, in one-letter code: Digeranylgeranylglyceryl phosphate synthase (281 aa).

A run of 7 helical transmembrane segments spans residues 14–34 (AMAAFAGLIGVLIAYNILSSA), 38–58 (VSLSLFDTSLIFAIVFLVTGA), 95–115 (LFLFITGITLAFLVNPLCGII), 149–169 (FLFGGAVFGMAGLQALVVLFL), 207–227 (ASYIAAAFGFTAMLASPVPYL), 235–255 (YLFVVAIADIFFLIAVYQILG), and 259–279 (AARSSKLFKFAMLFALISFIV).

Belongs to the UbiA prenyltransferase family. DGGGP synthase subfamily. Requires Mg(2+) as cofactor.

It localises to the cell membrane. It catalyses the reaction sn-3-O-(geranylgeranyl)glycerol 1-phosphate + (2E,6E,10E)-geranylgeranyl diphosphate = 2,3-bis-O-(geranylgeranyl)-sn-glycerol 1-phosphate + diphosphate. Its pathway is membrane lipid metabolism; glycerophospholipid metabolism. In terms of biological role, prenyltransferase that catalyzes the transfer of the geranylgeranyl moiety of geranylgeranyl diphosphate (GGPP) to the C2 hydroxyl of (S)-3-O-geranylgeranylglyceryl phosphate (GGGP). This reaction is the second ether-bond-formation step in the biosynthesis of archaeal membrane lipids. This chain is Digeranylgeranylglyceryl phosphate synthase, found in Methanococcoides burtonii (strain DSM 6242 / NBRC 107633 / OCM 468 / ACE-M).